An 819-amino-acid polypeptide reads, in one-letter code: Protein O-mannosyl-transferase tmem260 (819 aa).

A compositionally biased stretch (polar residues) spans 1 to 10; that stretch reads MNNSPTLSNT. The tract at residues 1-68 is disordered; sequence MNNSPTLSNT…NNNNNIINVN (68 aa). Low complexity predominate over residues 15–68; that stretch reads NNNNNSNSNSNSNNNNNNNNNNNNNSNNNNNNNNNVNRNVNNRNNNNNNIINVN. 3 N-linked (GlcNAc...) asparagine glycosylation sites follow: Asn18, Asn38, and Asn70. 7 helical membrane passes run 113 to 133, 152 to 172, 185 to 205, 210 to 230, 232 to 252, 285 to 305, and 316 to 336; these read IACIVLLFISCTIIYSMTQYP, VAHPPGYPLFTFLGYIFSHII, FMSSMIGSIASIFIYLTVYLW, WCGLLSAYMFTFSPLIWMYQI, GEVFSMNNMFVAMLMFLGVWY, LTNQHTLVLIVIPFAFWLMFI, and ILSNLVFYTLIGLSPYLLLFI. N-linked (GlcNAc...) asparagine glycosylation occurs at Asn349. 4 helical membrane passes run 391 to 411, 427 to 447, 459 to 479, and 505 to 525; these read LIIQFGYIGLALSLIGLLNLL, MIIFSFLFYITFFFNLCNLPI, FFMQPNVIISITMGLGIKSIF, and YLLPIIIILLVGNQIGFNYNL. N-linked (GlcNAc...) asparagine glycosylation is found at Asn531, Asn686, Asn693, and Asn783.

It belongs to the glycosyltransferase 117 (GT117) family.

The protein resides in the endoplasmic reticulum membrane. It catalyses the reaction a di-trans,poly-cis-dolichyl beta-D-mannosyl phosphate + L-seryl-[protein] = 3-O-(alpha-D-mannosyl)-L-seryl-[protein] + a di-trans,poly-cis-dolichyl phosphate + H(+). The catalysed reaction is a di-trans,poly-cis-dolichyl beta-D-mannosyl phosphate + L-threonyl-[protein] = 3-O-(alpha-D-mannosyl)-L-threonyl-[protein] + a di-trans,poly-cis-dolichyl phosphate + H(+). Its function is as follows. O-mannosyl-transferase that transfers mannosyl residues to the hydroxyl group of serine or threonine residues of proteins. This Dictyostelium discoideum (Social amoeba) protein is Protein O-mannosyl-transferase tmem260.